Here is a 315-residue protein sequence, read N- to C-terminus: Aspartate carbamoyltransferase catalytic subunit (315 aa).

Carbamoyl phosphate contacts are provided by arginine 55 and threonine 56. An L-aspartate-binding site is contributed by lysine 83. Residues arginine 105, histidine 138, and glutamine 141 each contribute to the carbamoyl phosphate site. Positions 171 and 225 each coordinate L-aspartate. Glycine 266 and proline 267 together coordinate carbamoyl phosphate.

The protein belongs to the aspartate/ornithine carbamoyltransferase superfamily. ATCase family. Heterododecamer (2C3:3R2) of six catalytic PyrB chains organized as two trimers (C3), and six regulatory PyrI chains organized as three dimers (R2).

The enzyme catalyses carbamoyl phosphate + L-aspartate = N-carbamoyl-L-aspartate + phosphate + H(+). Its pathway is pyrimidine metabolism; UMP biosynthesis via de novo pathway; (S)-dihydroorotate from bicarbonate: step 2/3. Catalyzes the condensation of carbamoyl phosphate and aspartate to form carbamoyl aspartate and inorganic phosphate, the committed step in the de novo pyrimidine nucleotide biosynthesis pathway. In Mycolicibacterium vanbaalenii (strain DSM 7251 / JCM 13017 / BCRC 16820 / KCTC 9966 / NRRL B-24157 / PYR-1) (Mycobacterium vanbaalenii), this protein is Aspartate carbamoyltransferase catalytic subunit.